We begin with the raw amino-acid sequence, 277 residues long: Large ribosomal subunit protein uL2 (277 aa).

Residues 219–277 form a disordered region; that stretch reads TVRGSVMNPNDHPHGGGEGKAPVGRKAPSTPWGKPALGLKTRNKKAKSDKLIVRRRNQK.

It belongs to the universal ribosomal protein uL2 family. In terms of assembly, part of the 50S ribosomal subunit. Forms a bridge to the 30S subunit in the 70S ribosome.

In terms of biological role, one of the primary rRNA binding proteins. Required for association of the 30S and 50S subunits to form the 70S ribosome, for tRNA binding and peptide bond formation. It has been suggested to have peptidyltransferase activity; this is somewhat controversial. Makes several contacts with the 16S rRNA in the 70S ribosome. This Streptococcus suis (strain 98HAH33) protein is Large ribosomal subunit protein uL2.